The primary structure comprises 101 residues: Small ribosomal subunit protein uS14 (101 aa).

It belongs to the universal ribosomal protein uS14 family. In terms of assembly, part of the 30S ribosomal subunit. Contacts proteins S3 and S10.

Functionally, binds 16S rRNA, required for the assembly of 30S particles and may also be responsible for determining the conformation of the 16S rRNA at the A site. This chain is Small ribosomal subunit protein uS14, found in Pseudoalteromonas translucida (strain TAC 125).